We begin with the raw amino-acid sequence, 88 residues long: uncharacterized protein (88 aa).

Expressed in a wide variety of tissues.

This is an uncharacterized protein from Homo sapiens (Human).